Consider the following 2624-residue polypeptide: MAIVTAFEDEPINGNGMLNAPSISPDPVLPLAIVGMGMRLPGAIHTPEHLWQTLVNKRSTRCEIPDTRFSTNGFHSPSAKPGSIAMRHGHFLADSDSLHHLDPSFFSMGMNEAVDIDPQQRLLLEVVYECMESSGQVNWQGSKIGCWVGVWGEDWLDLHAKDTFDSGMFRIAGGHDFAISNRISYEYNLKGPSYTIKAGCSSSLIALHEAVRALRAGDCDGAIVAGTNLIFSPTMSIGMTEQGVLSPDASCKSFDANANGYARGEAINAIYLKRLDVALQNGDSVRAVVRGTSSNSDGKTPGMSMPSSESHISLIRQAYREAGLDPAQTPFVEAHGTGTPVGDPLEAIAIARVFGGRDRTLYLGSVKPNLGHSEGASGISSILKAIQAMEHRTIPPNLNFNVPNPKIPFAESNMVVPCASVPWPEGQPVRVSVNSFGIGGSNAHCILESVEEYLGAHGAPWMPIGTRLSNTYTSCFPRLNFNKTDGGISTTSLSARSVNGMTNLIVHSTDEEMMQSPAVQARESYSNHHTLTETTNPSNNTATNGVVGYQPRKLLYVVSAGNATSLTAKIMDLHRYHQDHQAQAVDVAYTLCNRRDHLTHRTYAIASAQPSEGCLSDPALEFSPPAKINTTTPSHAVMVFTGQGAQWAGMASELVSDYPVFRATVSRLSRVLSQLEHAPAWNLLEELRKPEATSRIGEAEFSQPLVCAVQVGLVDLLRHWGLSAAAVIGHSSGEIGAAYAADAITADEAITIAYYRGYVNKSHTRQGGMAAIGLGVSQVAPFLSEGVTIACDNSPQSATISGDKDVLRDVCSMIRRKQPDCLVRELKVPAAYHSHHMLDLGGTLESLLKGKVHSQAPAIPFFSSVKVKEIREPGSLDAAYWRENLESPVQFTGALKILLAAQPSLSRTVFVEIGPHSALAGPLRQIFKAHGTGQEGYTPAMIRGKDCVDSVLSLVGDLFLQGITLDLSRISPPANVITDLPLYPWNHEKEFWSESRVGRDWRFRKYPNHELLGSQTLESSKLQPQWRNMLKLEHVPWLRDHQVMNDTIFPCAGYLAMAVEAVRQATEAADVEGFSLRNVVVRAALVVTESKPVELLTALQPVRLTNTLDSVWWEFSIMSHNGSVWQKHCNGQVRPGRDAHHIKAAFSEQAVVSRDKQYPRPVDSLYSELYRLGLRYGPAFCGLNKVHCQPGGKQASAILMETIVSESSYAIHPTTIDHCLQLLFPASCEGIFYRAEKLCVPTGIDNLYLADGKTRESEGARIEASSVARSGGAIFGAAKAFSKIDDALLLSLEGGKFSPIEVDDGIVEDLDPLASAHLVWKPHLDFADMHDLIRPNQDLINDRHNIDLVERLTLVAMMFIQERMGSVSSPANLDHIARFRNWIDAQVAGLKNGTYSGLEKDVEELLSLKPNDRLPLLKELEQIIIQSAPASTAVLICRIIDRCDDILQGRIDGIEVLQADNGLTNFYNYIESRTESVDFLTAAGHTQPTLRILEIGAGTGGASQVVLDSLTNQAEHSRLYSTYAYTDVSAGFFVAARERFKKYPALDFRVLDISKDPLEQGFHASSFDLIIANNVLHATPFLSQTLANVRKLLAPEGYLFLQELSPKMRMVNLIMGILPGWWLGAAEGRSEEPYLSPEQWDSLLRQTGFSSVDVVYDAPSPYQVNANIIARAASEPQARDEKSNGALGAPKAVLLHAPGDEVSERAAQIRSSLEESGLDTSLISIEQFQANATDTQGIIVSLLDLTTPFFASMSASKLTAIQSLVANLGSAHMMWILPRAQKDVSCSDDPAYGMSLGLIRTLRSERSVAITTVEVDTFDNAAFSAVARLAIKLAHQQQGDRTSISSGSDLDPDREFVLTKGVLETGRFHPVSLTHEMAAHAPASEATTLRIGRAGLLQTLKWVDLAIKEPEHNEVVVEPRCVGLNFRDVLVCMGIVEANDVSIGLEGSGVVRKVGNGVTGLQAGDRVFYMADNCFSSQITISALRCVKIPSSLSFEQAATMPCVYATVIHSLLDMGGLQSGQSVLIHSACGGIGIAALNLCRAMPGVEVYVTVGSEEKVQYLMQEFGLAREQIFHSRDTSFVEDVRAATGGRGVDVVLNSLSGELLHASWECVAPYGKMLEIGKRDFIGKAQLAMDLFEANRSFIGIDLARFDAARCGRLLQRTIDMYVAGAIQPVAPIKVFGATEAEASFRYMQKGTHLGKIVVSIGKAAAAAATTRQAVPTQLNPVATYVLVGGLGGLGRAVATWMVERGARHLLFLSRSAGQQAAHQAFFTELQCQGCSAQAVQGDVTLLGDVERALAAAPAGKPVRGILQMAMVLRDKAFADMDLADWHDTVTAKVLGTWNLHRAAPADMDFFLATGSISGLFGLPGQANYAAANSYLTALVQHRRAHGMPASVVHIGMIEDVGYLAENPARADALRAAGGFFLRTRQLLQAIDWALAPPSHKPHHLDHELAIGLRTTKPLLDPGNRVVWRSDPRMGLYHNLTATVATTADDGSDDSDALRFFITSITAEPALLDDPASLDLVTRTIGTRIYTFMLHPLDDIDSTASLTALGVDSLVTIELRNWIKRNFAGLDFSTLEILDARTIAGLAKLILDALKARFGSSTADQQRLQSDYLNMKAP.

The 422-residue stretch at 28 to 449 (VLPLAIVGMG…GSNAHCILES (422 aa)) folds into the Ketosynthase family 3 (KS3) domain. The active-site For beta-ketoacyl synthase activity is Cys-200. Positions 289-308 (VRGTSSNSDGKTPGMSMPSS) are disordered. Catalysis depends on for beta-ketoacyl synthase activity residues His-335 and His-372. Polar residues predominate over residues 523–544 (ESYSNHHTLTETTNPSNNTATN). Residues 523–545 (ESYSNHHTLTETTNPSNNTATNG) form a disordered region. The tract at residues 639–945 (VFTGQGAQWA…GYTPAMIRGK (307 aa)) is malonyl-CoA:ACP transacylase (MAT) domain. Positions 1009-1140 (HELLGSQTLE…GQVRPGRDAH (132 aa)) are N-terminal hotdog fold. The dehydratase (DH) domain stretch occupies residues 1009-1301 (HELLGSQTLE…LEGGKFSPIE (293 aa)). In terms of domain architecture, PKS/mFAS DH spans 1009–1306 (HELLGSQTLE…FSPIEVDDGI (298 aa)). The active-site Proton acceptor; for dehydratase activity is His-1041. The tract at residues 1157–1306 (QYPRPVDSLY…FSPIEVDDGI (150 aa)) is C-terminal hotdog fold. Asp-1217 functions as the Proton donor; for dehydratase activity in the catalytic mechanism. The tract at residues 1493 to 1599 (LEIGAGTGGA…RKLLAPEGYL (107 aa)) is methyltransferase (CMet) domain. The tract at residues 1895–2205 (GLLQTLKWVD…KGTHLGKIVV (311 aa)) is enoyl reductase (ER) (ER) domain. A ketoreductase (KR) domain region spans residues 2230–2509 (TYVLVGGLGG…DSDALRFFIT (280 aa)). Positions 2522 to 2600 (ASLDLVTRTI…GLAKLILDAL (79 aa)) constitute a Carrier domain. Ser-2559 carries the O-(pantetheine 4'-phosphoryl)serine modification.

It functions in the pathway mycotoxin biosynthesis. Highly reducing polyketide synthase; part of the gene cluster that mediates the biosynthesis of the host-selective toxins (HSTs) AAL-toxins, sphinganine-analog mycotoxins responsible for Alternaria stem canker on tomato by the tomato pathotype. The biosynthesis starts with the polyketide synthase ALT1-catalyzed C-16 carbon chain assembly from one starter acetyl-CoA unit with malonyl-CoA extender units. ALT1 also selectively transfers methyl groups at the first and the third cycle of chain elongation for AAL toxin. The C-16 polyketide chain is released from the enzyme by a nucleophilic attack of a carbanion, which is derived from R-carbon of glycin by decarboxylation, on the carbonyl carbon of polyketide acyl chain. This step is probably catalyzed by a pyridoxal 5'-phosphate-dependent aminoacyl transferase ALT4. The respective functions of the other enzymes encoded by the cluster have still to be elucidated. The sphingosine N-acyltransferase-like protein ALT7 seems not to act as a resistance/self-tolerance factor against the toxin in the toxin biosynthetic gene cluster, contrary to what is expected. In Alternaria alternata (Alternaria rot fungus), this protein is Highly reducing polyketide synthase ALT1.